The following is a 114-amino-acid chain: Nucleoid-associated protein MAB_0319 (114 aa).

The protein belongs to the YbaB/EbfC family. Homodimer.

The protein localises to the cytoplasm. It is found in the nucleoid. Binds to DNA and alters its conformation. May be involved in regulation of gene expression, nucleoid organization and DNA protection. This chain is Nucleoid-associated protein MAB_0319, found in Mycobacteroides abscessus (strain ATCC 19977 / DSM 44196 / CCUG 20993 / CIP 104536 / JCM 13569 / NCTC 13031 / TMC 1543 / L948) (Mycobacterium abscessus).